The primary structure comprises 436 residues: Protein arginine methyltransferase NDUFAF7, mitochondrial (436 aa).

Residues 1-41 (MNALVRRCVARTGIPSIWRRKCFSSGNEPAESNHVTPMLRH) constitute a mitochondrion transit peptide. Positions 413–436 (QGGKACQSEAPSTSVPGFDELVWH) are disordered.

The protein belongs to the NDUFAF7 family. Interacts with NDUFS2.

The protein localises to the mitochondrion. It catalyses the reaction L-arginyl-[protein] + 2 S-adenosyl-L-methionine = N(omega),N(omega)'-dimethyl-L-arginyl-[protein] + 2 S-adenosyl-L-homocysteine + 2 H(+). In terms of biological role, arginine methyltransferase involved in the assembly or stability of mitochondrial NADH:ubiquinone oxidoreductase complex (complex I). Acts by mediating symmetric dimethylation of 'Arg-118' of NDUFS2 after it assembles into the complex I, stabilizing the early intermediate complex. This Rattus norvegicus (Rat) protein is Protein arginine methyltransferase NDUFAF7, mitochondrial.